Reading from the N-terminus, the 217-residue chain is Large ribosomal subunit protein uL1 (217 aa).

It belongs to the universal ribosomal protein uL1 family. Part of the 50S ribosomal subunit.

Its function is as follows. Binds directly to 23S rRNA. Probably involved in E site tRNA release. Functionally, protein L1 is also a translational repressor protein, it controls the translation of its operon by binding to its mRNA. This Thermoplasma volcanium (strain ATCC 51530 / DSM 4299 / JCM 9571 / NBRC 15438 / GSS1) protein is Large ribosomal subunit protein uL1.